Here is a 225-residue protein sequence, read N- to C-terminus: Octanoyltransferase (225 aa).

The BPL/LPL catalytic domain maps to 43-225 (GTAPELVWLL…KTFRDVFGRG (183 aa)). Residues 82–89 (RGGQYTYH), 157–159 (AIG), and 170–172 (GVS) contribute to the substrate site. Catalysis depends on Cys-188, which acts as the Acyl-thioester intermediate.

Belongs to the LipB family.

Its subcellular location is the cytoplasm. It carries out the reaction octanoyl-[ACP] + L-lysyl-[protein] = N(6)-octanoyl-L-lysyl-[protein] + holo-[ACP] + H(+). Its pathway is protein modification; protein lipoylation via endogenous pathway; protein N(6)-(lipoyl)lysine from octanoyl-[acyl-carrier-protein]: step 1/2. Catalyzes the transfer of endogenously produced octanoic acid from octanoyl-acyl-carrier-protein onto the lipoyl domains of lipoate-dependent enzymes. Lipoyl-ACP can also act as a substrate although octanoyl-ACP is likely to be the physiological substrate. The protein is Octanoyltransferase of Parvibaculum lavamentivorans (strain DS-1 / DSM 13023 / NCIMB 13966).